A 1848-amino-acid chain; its full sequence is Unconventional myosin-Vb (1848 aa).

Methionine 1 is modified (N-acetylmethionine). One can recognise a Myosin N-terminal SH3-like domain in the interval 8-60; that stretch reads SQCTRVWIPDPDEVWRSAELTKDYKEGDKSLQLRLEDETILEYPIDVQRNQLP. A requires for interaction with LIMA1 region spans residues 21 to 40; sequence VWRSAELTKDYKEGDKSLQL. Positions 69–761 constitute a Myosin motor domain; it reads VGENDLTALS…QVAYLEKLRA (693 aa). An ATP-binding site is contributed by 163-170; sequence GESGAGKT. A disordered region spans residues 596-630; that stretch reads KDPVPATTPGKGSSSKISVRSARPPMKVSNKEHKK. An actin-binding region spans residues 640–662; sequence LHLLMETLNATTPHYVRCIKPND. 6 consecutive IQ domains span residues 769–798, 792–821, 817–848, 840–869, 865–896, and 888–917; these read IMIQ…QRYC, LTLQ…VLQK, VVLQ…FTRA, VVIQ…TIQK, TTIQ…AFRM, and IVIQ…EHLK. Coiled coils occupy residues 899-1266 and 1341-1471; these read ARRE…ILRT and RLLE…GMLE. Disordered regions lie at residues 1093 to 1123 and 1166 to 1192; these read QTPG…EIGD and QLEK…LDPN. Polar residues predominate over residues 1101 to 1121; the sequence is PSNQSSLESDSNYPSISTSEI. Residues 1166–1179 show a composition bias toward basic and acidic residues; the sequence is QLEKREQQDSKKVQ. Serine 1446 is modified (phosphoserine). Positions 1526 to 1803 constitute a Dilute domain; the sequence is TSTINGIKKV…IRTIQAQLQE (278 aa).

It belongs to the TRAFAC class myosin-kinesin ATPase superfamily. Myosin family. Component of the CART complex, at least composed of ACTN4, HGS/HRS, MYO5B and TRIM3. Interacts with RAB11FIP2, RAB11A, and RAB8A. Found in a complex with CFTR and RAB11A. Interacts with NPC1L1;. Interacts with LIMA1.

Its subcellular location is the cytoplasm. In terms of biological role, may be involved in vesicular trafficking via its association with the CART complex. The CART complex is necessary for efficient transferrin receptor recycling but not for EGFR degradation. Required in a complex with RAB11A and RAB11FIP2 for the transport of NPC1L1 to the plasma membrane. Together with RAB11A participates in CFTR trafficking to the plasma membrane and TF (transferrin) recycling in nonpolarized cells. Together with RAB11A and RAB8A participates in epithelial cell polarization. Together with RAB25 regulates transcytosis. Required for proper localization of bile salt export pump ABCB11 at the apical/canalicular plasma membrane of hepatocytes. The polypeptide is Unconventional myosin-Vb (MYO5B) (Homo sapiens (Human)).